The primary structure comprises 244 residues: Ribosomal RNA small subunit methyltransferase NEP1 (244 aa).

Positions 1–33 (MSAASGGFQPRERRFSVQEQDWETTPPKKLRLG) are disordered. Residues Ser5 and Ser16 each carry the phosphoserine modification. S-adenosyl-L-methionine is bound by residues Thr176, Gly201, Gly206, and 219–224 (ISNYPL).

The protein belongs to the class IV-like SAM-binding methyltransferase superfamily. RNA methyltransferase NEP1 family. Homodimer. Part of the small subunit (SSU) processome, composed of more than 70 proteins and the RNA chaperone small nucleolar RNA (snoRNA) U3.

Its subcellular location is the nucleus. The protein localises to the nucleolus. The enzyme catalyses pseudouridine(1248) in human 18S rRNA + S-adenosyl-L-methionine = N(1)-methylpseudouridine(1248) in human 18S rRNA + S-adenosyl-L-homocysteine + H(+). In terms of biological role, S-adenosyl-L-methionine-dependent pseudouridine N(1)-methyltransferase that methylates pseudouridine at position in 18S rRNA. Involved the biosynthesis of the hypermodified N1-methyl-N3-(3-amino-3-carboxypropyl) pseudouridine (m1acp3-Psi) conserved in eukaryotic 18S rRNA. Is not able to methylate uridine at this position. Also has an essential role in 40S ribosomal subunit biogenesis independent on its methyltransferase activity, facilitating the incorporation of ribosomal protein S19 during the formation of pre-ribosomes. Part of the small subunit (SSU) processome, first precursor of the small eukaryotic ribosomal subunit. During the assembly of the SSU processome in the nucleolus, many ribosome biogenesis factors, an RNA chaperone and ribosomal proteins associate with the nascent pre-rRNA and work in concert to generate RNA folding, modifications, rearrangements and cleavage as well as targeted degradation of pre-ribosomal RNA by the RNA exosome. The polypeptide is Ribosomal RNA small subunit methyltransferase NEP1 (Mus musculus (Mouse)).